Consider the following 29-residue polypeptide: Potassium channel toxin alpha-KTx 8.4 (29 aa).

3 disulfides stabilise this stretch: Cys-3–Cys-19, Cys-6–Cys-24, and Cys-10–Cys-26.

The protein belongs to the short scorpion toxin superfamily. Potassium channel inhibitor family. Alpha-KTx 08 subfamily. In terms of tissue distribution, expressed by the venom gland.

Its subcellular location is the secreted. Functionally, inhibits voltage-gated potassium channels. This Leiurus hebraeus (Hebrew deathstalker scorpion) protein is Potassium channel toxin alpha-KTx 8.4.